We begin with the raw amino-acid sequence, 485 residues long: Trk system potassium uptake protein TrkG (485 aa).

Topologically, residues 1-5 (MNTSH) are cytoplasmic. Residues 6 to 32 (VRVVTHMCGFLVWLYSLSMLPPMVVAL) traverse the membrane as a helical segment. Topologically, residues 33–38 (FYKEKS) are periplasmic. A helical transmembrane segment spans residues 39-60 (LFVFFITFVIFFCIGGGAWYTT). Residues 61-68 (KKSGIQLR) are Cytoplasmic-facing. The helical transmembrane segment at 69–93 (TRDGFIIIVMFWILFSVISAFPLWI) threads the bilayer. An intramembrane region (helical; Pore-forming) is located at residues 101 to 112 (FIDALFEGVSGI). Residues 113–118 (TTTGAT) lie within the membrane without spanning it. The selectivity filter part 1 stretch occupies residues 113–118 (TTTGAT). Positions 114 and 115 each coordinate K(+). The Periplasmic portion of the chain corresponds to 119 to 127 (VIDDVSSLP). The helical transmembrane segment at 128–153 (RAYLYYRSQLNFIGGLGVIVLAVAVL) threads the bilayer. Topologically, residues 154–180 (PLLGIGGAKLYQSEMPGPFKDDKLTPR) are cytoplasmic. A helical membrane pass occupies residues 181 to 205 (LADTSRTLWITYSLLGIACIVCYRL). The Periplasmic segment spans residues 206–208 (AGM). Pro209 is an intramembrane region. The segment at residues 210–221 (LFDAICHGISTV) is an intramembrane region (helical; Pore-forming). An intramembrane segment occupies 222 to 227 (SLGGFS). The tract at residues 222-227 (SLGGFS) is selectivity filter part 2. The K(+) site is built by Leu223 and Gly224. Over 228 to 237 (THSESIGYFN) the chain is Periplasmic. The segment at residues 238–253 (NYLVELVAGSFSLLSA) is an intramembrane region (helical). A helical membrane pass occupies residues 277 to 297 (LRFFLLIALGVIIVTSFQVWH). The helical; Pore-forming intramembrane region spans 303–318 (LHGSFIHSFFLASSML). Residues 319–324 (TDNGLA) lie within the membrane without spanning it. Positions 319 to 324 (TDNGLA) are selectivity filter part 3. Residues Asp320 and Asn321 each contribute to the K(+) site. Residues 325–332 (TQDYASWP) are Periplasmic-facing. The helical intramembrane region spans 333-344 (THTIVFLLLSSF). The segment at residues 345–357 (FGGCIGSTCGGIK) is an intramembrane region (note=Loop between two helices). Residues 392–419 (TDRVMRSVWSFFFLYTLFTVFFILVLNG) traverse the membrane as a helical segment. Topologically, residues 420–421 (MG) are periplasmic. Residues 422–423 (YD) lie within the membrane without spanning it. An intramembrane region (helical; Pore-forming) is located at residues 424-434 (FLTSFATVAAC). An intramembrane segment occupies 435 to 441 (INNMGLG). Positions 436–441 (NNMGLG) are selectivity filter part 4. Positions 437 and 438 each coordinate K(+). At 442–453 (FGATASSFGVLN) the chain is on the periplasmic side. An intramembrane region (helical) is located at residues 454 to 465 (DIAKCLMCIAMI).

The protein belongs to the TrkH potassium transport family.

It localises to the cell inner membrane. Functionally, low-affinity potassium transport system. Interacts with Trk system potassium uptake protein TrkA. Requires TrkE (sapD) for maximal transport activity, low activity is seen in its absence; no further stimulation is seen with SapF. Transport in the absence of SapD is dependent on a high membrane potential and a high cytoplasmic ATP concentration, suggesting this protein may be able to interact with other ATP-binding proteins. Can transport potassium and rubidium. The polypeptide is Trk system potassium uptake protein TrkG (trkG) (Escherichia coli (strain K12)).